The following is a 347-amino-acid chain: Protein RecA (347 aa).

65 to 72 is an ATP binding site; sequence GPESSGKT. Basic and acidic residues predominate over residues 327-336; that stretch reads KFEPTELSRE. A disordered region spans residues 327 to 347; that stretch reads KFEPTELSREEGDEDTLEDAM. Over residues 337–347 the composition is skewed to acidic residues; sequence EGDEDTLEDAM.

The protein belongs to the RecA family.

It localises to the cytoplasm. In terms of biological role, can catalyze the hydrolysis of ATP in the presence of single-stranded DNA, the ATP-dependent uptake of single-stranded DNA by duplex DNA, and the ATP-dependent hybridization of homologous single-stranded DNAs. It interacts with LexA causing its activation and leading to its autocatalytic cleavage. The polypeptide is Protein RecA (Xylella fastidiosa (strain M12)).